Reading from the N-terminus, the 378-residue chain is Probable protein phosphatase 2C 55 (378 aa).

Disordered stretches follow at residues 1-59 and 79-115; these read MRRH…ASKG and EGEA…GVGC. A compositionally biased stretch (low complexity) spans 7–26; it reads LGLLRRAAASSTSAASSRAG. Positions 92–104 are enriched in basic residues; sequence GGRRGRNSKRQPP. In terms of domain architecture, PPM-type phosphatase spans 122–369; sequence SWGYSSFQGR…DNVTCIVLQF (248 aa). Residues Asp158, Gly159, Asp321, and Asp360 each coordinate Mn(2+).

Belongs to the PP2C family. Requires Mg(2+) as cofactor. It depends on Mn(2+) as a cofactor.

The catalysed reaction is O-phospho-L-seryl-[protein] + H2O = L-seryl-[protein] + phosphate. The enzyme catalyses O-phospho-L-threonyl-[protein] + H2O = L-threonyl-[protein] + phosphate. This chain is Probable protein phosphatase 2C 55, found in Oryza sativa subsp. japonica (Rice).